A 281-amino-acid polypeptide reads, in one-letter code: Probable thioesterase gloN (281 aa).

The segment at 207-233 (LDDGSNNSRDLNETSPTETSNDSETQA) is disordered. The span at 210–232 (GSNNSRDLNETSPTETSNDSETQ) shows a compositional bias: polar residues.

The protein belongs to the AMT4 thioesterase family.

The protein operates within mycotoxin biosynthesis. Its function is as follows. Probable thioesterase; part of the gene cluster that mediates the biosynthesis of pneumocandins, lipohexapeptides of the echinocandin family that prevent fungal cell wall formation by non-competitive inhibition of beta-1,3-glucan synthase. The 10,12-dimethylmyristoyl side chain is synthesized by the reducing polyketide synthase gloL/GLPKS4. The thioesterase gloN/GLHYD exclusively interacts with gloL/GLPKS4 to maintain turnover of the polyketide side chain. The 10R,12S-dimethylmyristic acid is then transferred to the first thiolation domain of the nonribosomal peptide synthetase gloA/GLNRPS4 by the acyl-AMP ligase gloD/GLligase, followed by its acylation to L-ornithine to trigger elongation of the cyclic hexapeptide. L-ornithine, 4R-hydroxyl-L-proline (generated from L-proline by the dioxygenase gloF/GLOXY2), 3S-hydroxyl-L-homotyrosine (generated by gloG/GLHtyB, gloH/GLHtyA, gloI/GLHtyC, gloJ/GLHtyD and hydroxylated at C-3 by the dioxygenase gloM/GLOXY1), 3R-hydroxyl-L-glutamine (generated from L-glutamine probably by the dioxygenase gloE/GLOXY3) and 3S-hydroxyl-L-proline (generated from L-proline by the dioxygenase gloF/GLOXY2 to yield pneumocandin B0), or 3S-hydroxyl-4S-methyl-L-proline (generated from L-leucine by the dioxygenase gloC/GLOXY4 to yield pneumocandin A0) are sequentially added to the growing chain. The last C domain of gloA/GLNRPS4 is proposed to be responsible for cyclization by condensation to form the peptide bond between L-ornithine and 3S-hydroxyl-4S-methyl-L-proline (for pneumocandin A0) or 3S-hydroxyl-L-proline (for pneumocandin B0). Finally, the subsequent C-4 hydroxylation of 3S-hydroxyl-L-homotyrosine and L-ornithine dihydroxylation at C-4 and C-5 are performed by the cytochrome P450 monooxygenases gloP/GLP450-1 and gloO/GLP450-2, respectively. The polypeptide is Probable thioesterase gloN (Glarea lozoyensis (strain ATCC 20868 / MF5171)).